The chain runs to 593 residues: High affinity cGMP-specific 3',5'-cyclic phosphodiesterase 9A (593 aa).

Residues 87–141 (SAGVEDKRTTSRGQSAERPLRDRRVVGLEQPRREGAFESGQVEPRPREPQGCYQE) form a disordered region. A compositionally biased stretch (basic and acidic residues) spans 104 to 122 (RPLRDRRVVGLEQPRREGA). The PDEase domain occupies 236 to 557 (PRRDVPTYPK…DRYEELKRID (322 aa)). The active-site Proton donor is the His312. 312 to 316 (HNFRH) is a 3',5'-cyclic GMP binding site. 3 residues coordinate Zn(2+): His316, His352, and Asp353. Asp353 contributes to the 3',5'-cyclic GMP binding site. Asp353 contributes to the Mg(2+) binding site. Ser379 bears the Phosphoserine mark. Residues Asp462, Tyr484, and 512 to 513 (AQ) each bind 3',5'-cyclic GMP. Asp462 contacts Zn(2+). Positions 564–593 (QKKTDSLTSGATEKSRERSRDVKNSEGDCA) are disordered. The segment covering 576–593 (EKSRERSRDVKNSEGDCA) has biased composition (basic and acidic residues).

This sequence belongs to the cyclic nucleotide phosphodiesterase family. PDE9 subfamily. In terms of assembly, homodimer. It depends on Zn(2+) as a cofactor. Mg(2+) serves as cofactor. In terms of tissue distribution, expressed in all tissues examined (testis, brain, small intestine, skeletal muscle, heart, lung, thymus, spleen, placenta, kidney, liver, pancreas, ovary and prostate) except blood. Highest levels in brain, heart, kidney, spleen, prostate and colon. Isoform PDE9A12 is found in prostate. In brain, present in the cortex, cerebellum, and subiculum (at protein level). In heart, primarily localizes to myocytes.

The protein resides in the cell projection. Its subcellular location is the ruffle membrane. It localises to the cytoplasm. The protein localises to the perinuclear region. It is found in the golgi apparatus. The protein resides in the endoplasmic reticulum. Its subcellular location is the cell membrane. It localises to the sarcolemma. It carries out the reaction 3',5'-cyclic GMP + H2O = GMP + H(+). It functions in the pathway purine metabolism; 3',5'-cyclic GMP degradation; GMP from 3',5'-cyclic GMP: step 1/1. Its activity is regulated as follows. Inhibited by zaprinast; inhibitor is however not specific to PDE9A. Specifically inhibited by BAY-73-6691 (1-(2-chlorophenyl)-6-((2R)-3,3,3- trifluoro-2-methylpropyl)-1,5-dihydro-4H-pyrazolo(3,4-d)pyrimidine-4-one). BAY-73-9961 has two enantiomers, (R) and (S), due to the presence of a chiral center, and both forms vary in their pattern of interaction. Specifically inhibited by PF-4181366 (4H-Pyrazolo[3,4-d]pyrimidin-4-one, 1- cyclopentyl-1,5-dihydro-6-[(3S,4S)-4-methyl- 1-(6-quinoxalinylmethyl)-3-pyrrolidinyl]-one). Specifically inhibited by PF-4449613 ((R)-6-(1-(3-phenoxyazetidin-1-yl)ethyl)-1-(tetrahydro-2H-pyran-4-yl)-1H-pyrazolo[3,4-d]pyrimidin- 4(5H)-one). Specifically inhibited by inhibitor 28 (2-((1-(2-Chlorophenyl)-4-hydroxy-1Hpyrazolo[ 3,4-d]pyrimidin-6-yl)amino)-N-(4- methoxyphenyl)propanamide): inhibitor forms a hydrogen bond with Tyr-484 and Gln-513. Specifically inhibited by 1-Cyclopentyl-6-[(1r)-1-(3-phenoxyazetidin- 1-Yl)ethyl]-1,5-dihydro-4h-pyrazolo[3,4-D] pyrimidin-4-one: inhibitor forms a hydrogen bond with Tyr-484 and Gln-513. In terms of biological role, specifically hydrolyzes the second messenger cGMP, which is a key regulator of many important physiological processes. Highly specific: compared to other members of the cyclic nucleotide phosphodiesterase family, has the highest affinity and selectivity for cGMP. Specifically regulates natriuretic-peptide-dependent cGMP signaling in heart, acting as a regulator of cardiac hypertrophy in myocytes and muscle. Does not regulate nitric oxide-dependent cGMP in heart. Additional experiments are required to confirm whether its ability to hydrolyze natriuretic-peptide-dependent cGMP is specific to heart or is a general feature of the protein. In brain, involved in cognitive function, such as learning and long-term memory. This Homo sapiens (Human) protein is High affinity cGMP-specific 3',5'-cyclic phosphodiesterase 9A.